A 511-amino-acid polypeptide reads, in one-letter code: 2-isopropylmalate synthase (511 aa).

A compositionally biased stretch (basic and acidic residues) spans 1 to 16; the sequence is MTRKIDIFDTTLRDGE. The segment at 1–23 is disordered; sequence MTRKIDIFDTTLRDGEQSPGASM. Positions 5 to 268 constitute a Pyruvate carboxyltransferase domain; the sequence is IDIFDTTLRD…HTDVVTQELT (264 aa). Mn(2+)-binding residues include aspartate 14, histidine 203, histidine 205, and asparagine 239. A regulatory domain region spans residues 392 to 511; that stretch reads ALESVQVVCG…IQTTRSKQGK (120 aa).

It belongs to the alpha-IPM synthase/homocitrate synthase family. LeuA type 1 subfamily. In terms of assembly, homodimer. Requires Mn(2+) as cofactor.

Its subcellular location is the cytoplasm. It catalyses the reaction 3-methyl-2-oxobutanoate + acetyl-CoA + H2O = (2S)-2-isopropylmalate + CoA + H(+). It participates in amino-acid biosynthesis; L-leucine biosynthesis; L-leucine from 3-methyl-2-oxobutanoate: step 1/4. Catalyzes the condensation of the acetyl group of acetyl-CoA with 3-methyl-2-oxobutanoate (2-ketoisovalerate) to form 3-carboxy-3-hydroxy-4-methylpentanoate (2-isopropylmalate). This is 2-isopropylmalate synthase from Olsenella uli (strain ATCC 49627 / DSM 7084 / CCUG 31166 / CIP 109912 / JCM 12494 / LMG 11480 / NCIMB 702895 / VPI D76D-27C) (Lactobacillus uli).